The sequence spans 494 residues: Plasmid recombination enzyme (494 aa).

2 residues coordinate DNA: Tyr44 and Tyr115.

Belongs to the plasmid mobilization pre family.

In terms of biological role, the interaction of the RSA site and the PRE protein may not only serves a function in plasmid maintenance, but may also contributes to the distribution of small antibiotic resistance plasmids among Gram-positive bacteria. This Streptococcus agalactiae protein is Plasmid recombination enzyme (pre).